A 342-amino-acid polypeptide reads, in one-letter code: S-adenosylmethionine:tRNA ribosyltransferase-isomerase (342 aa).

It belongs to the QueA family. As to quaternary structure, monomer.

The protein localises to the cytoplasm. It carries out the reaction 7-aminomethyl-7-carbaguanosine(34) in tRNA + S-adenosyl-L-methionine = epoxyqueuosine(34) in tRNA + adenine + L-methionine + 2 H(+). It functions in the pathway tRNA modification; tRNA-queuosine biosynthesis. In terms of biological role, transfers and isomerizes the ribose moiety from AdoMet to the 7-aminomethyl group of 7-deazaguanine (preQ1-tRNA) to give epoxyqueuosine (oQ-tRNA). The chain is S-adenosylmethionine:tRNA ribosyltransferase-isomerase from Brevibacillus brevis (strain 47 / JCM 6285 / NBRC 100599).